The chain runs to 361 residues: Chorismate synthase (361 aa).

Arginine 48 is a binding site for NADP(+). Residues 125–127 (RSS), 238–239 (NA), glycine 278, 293–297 (KPTSS), and arginine 319 contribute to the FMN site.

It belongs to the chorismate synthase family. In terms of assembly, homotetramer. It depends on FMNH2 as a cofactor.

The enzyme catalyses 5-O-(1-carboxyvinyl)-3-phosphoshikimate = chorismate + phosphate. The protein operates within metabolic intermediate biosynthesis; chorismate biosynthesis; chorismate from D-erythrose 4-phosphate and phosphoenolpyruvate: step 7/7. In terms of biological role, catalyzes the anti-1,4-elimination of the C-3 phosphate and the C-6 proR hydrogen from 5-enolpyruvylshikimate-3-phosphate (EPSP) to yield chorismate, which is the branch point compound that serves as the starting substrate for the three terminal pathways of aromatic amino acid biosynthesis. This reaction introduces a second double bond into the aromatic ring system. This chain is Chorismate synthase, found in Vibrio anguillarum (strain ATCC 68554 / 775) (Listonella anguillarum).